The primary structure comprises 204 residues: Wound-induced proteinase inhibitor 2 (204 aa).

An N-terminal signal peptide occupies residues 1-25; that stretch reads MAVPKEVSFLASLLVLGILLLHVDA. 3 repeat units span residues 25 to 67, 68 to 125, and 126 to 183. Intrachain disulfides connect cysteine 28–cysteine 100, cysteine 38–cysteine 75, cysteine 41–cysteine 59, cysteine 42–cysteine 71, cysteine 48–cysteine 84, and cysteine 99–cysteine 117. The stretch at 184–204 is one 4; truncated repeat; sequence PKACPKNCDPNIAYSLCLYEK.

The protein belongs to the protease inhibitor I20 (potato type II proteinase inhibitor) family.

The chain is Wound-induced proteinase inhibitor 2 (PIN2) from Capsicum annuum (Capsicum pepper).